An 82-amino-acid chain; its full sequence is Large ribosomal subunit protein uL24c (82 aa).

It belongs to the universal ribosomal protein uL24 family. Part of the 50S ribosomal subunit.

It is found in the plastid. The protein resides in the chloroplast. One of two assembly initiator proteins, it binds directly to the 5'-end of the 23S rRNA, where it nucleates assembly of the 50S subunit. In Phaeodactylum tricornutum (strain CCAP 1055/1), this protein is Large ribosomal subunit protein uL24c (rpl24).